We begin with the raw amino-acid sequence, 126 residues long: Spermidine export protein MdtJ (126 aa).

Helical transmembrane passes span 1–21 (MIYW…TLSM), 30–50 (ITGH…LSLA), 54–74 (VALG…ITLF), and 81–101 (EPFS…IVML).

This sequence belongs to the drug/metabolite transporter (DMT) superfamily. Small multidrug resistance (SMR) (TC 2.A.7.1) family. MdtJ subfamily. In terms of assembly, forms a complex with MdtI.

It is found in the cell inner membrane. Catalyzes the excretion of spermidine. In Sodalis glossinidius (strain morsitans), this protein is Spermidine export protein MdtJ.